The sequence spans 149 residues: UPF0179 protein Hlac_2319 (149 aa).

It belongs to the UPF0179 family.

The polypeptide is UPF0179 protein Hlac_2319 (Halorubrum lacusprofundi (strain ATCC 49239 / DSM 5036 / JCM 8891 / ACAM 34)).